Consider the following 358-residue polypeptide: Heme A synthase (358 aa).

Helical transmembrane passes span 22 to 42 (IQVW…VGGA), 107 to 127 (VLGR…WVTK), 133 to 153 (IFLQ…IGWW), 172 to 192 (LAIH…LSRG), 208 to 228 (FAGW…LVAG), 269 to 289 (FVHR…ALYV), 302 to 322 (AIFL…TLLH), and 324 to 344 (VPIS…CFSV). Residue histidine 271 participates in heme binding. Residue histidine 332 participates in heme binding.

Belongs to the COX15/CtaA family. Type 2 subfamily. In terms of assembly, interacts with CtaB. The cofactor is heme b.

The protein resides in the cell membrane. The enzyme catalyses Fe(II)-heme o + 2 A + H2O = Fe(II)-heme a + 2 AH2. Its pathway is porphyrin-containing compound metabolism; heme A biosynthesis; heme A from heme O: step 1/1. Functionally, catalyzes the conversion of heme O to heme A by two successive hydroxylations of the methyl group at C8. The first hydroxylation forms heme I, the second hydroxylation results in an unstable dihydroxymethyl group, which spontaneously dehydrates, resulting in the formyl group of heme A. This Bartonella bacilliformis (strain ATCC 35685 / KC583 / Herrer 020/F12,63) protein is Heme A synthase.